The primary structure comprises 95 residues: uncharacterized protein (95 aa).

The chain crosses the membrane as a helical span at residues 45–65 (WLSGLAFVLQAALVMPVVLAF).

It localises to the membrane. This is an uncharacterized protein from Mycobacterium leprae (strain TN).